Consider the following 121-residue polypeptide: Large ribosomal subunit protein uL14 (121 aa).

This sequence belongs to the universal ribosomal protein uL14 family. In terms of assembly, part of the 50S ribosomal subunit. Forms a cluster with proteins L3 and L19. In the 70S ribosome, L14 and L19 interact and together make contacts with the 16S rRNA in bridges B5 and B8.

In terms of biological role, binds to 23S rRNA. Forms part of two intersubunit bridges in the 70S ribosome. This chain is Large ribosomal subunit protein uL14, found in Phocaeicola vulgatus (strain ATCC 8482 / DSM 1447 / JCM 5826 / CCUG 4940 / NBRC 14291 / NCTC 11154) (Bacteroides vulgatus).